Here is a 273-residue protein sequence, read N- to C-terminus: Lactose transport system permease protein LacG (273 aa).

Helical transmembrane passes span 15–35 (YSVL…MVIG), 77–97 (IALV…YGFE), 110–130 (VILL…FMLM), 134–154 (GLLN…FIIF), 182–204 (FFYI…VFML), and 240–260 (GTVM…FFAM). The ABC transmembrane type-1 domain occupies 71–260 (FWNSVKIALV…LPTLLVFFAM (190 aa)).

This sequence belongs to the binding-protein-dependent transport system permease family. MalFG subfamily.

It localises to the cell inner membrane. Functionally, part of the binding-protein-dependent transport system for lactose. Probably responsible for the translocation of the substrate across the membrane. The protein is Lactose transport system permease protein LacG (lacG) of Rhizobium radiobacter (Agrobacterium tumefaciens).